A 496-amino-acid chain; its full sequence is Glycogen synthase (496 aa).

K15 lines the ADP-alpha-D-glucose pocket.

It belongs to the glycosyltransferase 1 family. Bacterial/plant glycogen synthase subfamily.

The catalysed reaction is [(1-&gt;4)-alpha-D-glucosyl](n) + ADP-alpha-D-glucose = [(1-&gt;4)-alpha-D-glucosyl](n+1) + ADP + H(+). The protein operates within glycan biosynthesis; glycogen biosynthesis. Its function is as follows. Synthesizes alpha-1,4-glucan chains using ADP-glucose. The sequence is that of Glycogen synthase from Natranaerobius thermophilus (strain ATCC BAA-1301 / DSM 18059 / JW/NM-WN-LF).